Here is a 125-residue protein sequence, read N- to C-terminus: Small ribosomal subunit protein eS8 (125 aa).

The protein belongs to the eukaryotic ribosomal protein eS8 family. As to quaternary structure, part of the 30S ribosomal subunit.

The sequence is that of Small ribosomal subunit protein eS8 from Methanosphaerula palustris (strain ATCC BAA-1556 / DSM 19958 / E1-9c).